A 513-amino-acid polypeptide reads, in one-letter code: Light-independent protochlorophyllide reductase subunit B (513 aa).

Aspartate 36 lines the [4Fe-4S] cluster pocket. Aspartate 299 (proton donor) is an active-site residue. 434 to 435 serves as a coordination point for substrate; the sequence is GM.

This sequence belongs to the ChlB/BchB/BchZ family. Protochlorophyllide reductase is composed of three subunits; ChlL, ChlN and ChlB. Forms a heterotetramer of two ChlB and two ChlN subunits. Requires [4Fe-4S] cluster as cofactor.

Its subcellular location is the plastid. It localises to the chloroplast. The enzyme catalyses chlorophyllide a + oxidized 2[4Fe-4S]-[ferredoxin] + 2 ADP + 2 phosphate = protochlorophyllide a + reduced 2[4Fe-4S]-[ferredoxin] + 2 ATP + 2 H2O. It participates in porphyrin-containing compound metabolism; chlorophyll biosynthesis (light-independent). Its function is as follows. Component of the dark-operative protochlorophyllide reductase (DPOR) that uses Mg-ATP and reduced ferredoxin to reduce ring D of protochlorophyllide (Pchlide) to form chlorophyllide a (Chlide). This reaction is light-independent. The NB-protein (ChlN-ChlB) is the catalytic component of the complex. The sequence is that of Light-independent protochlorophyllide reductase subunit B from Cycas taitungensis (Prince sago).